The following is a 219-amino-acid chain: Lipid transferase CIDEB (219 aa).

In terms of domain architecture, CIDE-N spans 34–110 (PQRPFRVCDH…VLQSGQSWSP (77 aa)).

Belongs to the CIDE family. As to quaternary structure, interacts with DFFA. Interacts with DFFB; inhibited by DFFB. Interacts with APOB. Interacts with PREB/SEC12; facilitating loading of SCAP-SREBP into COPII vesicles. (Microbial infection) Interacts (via N-terminus) with HCV non-structural protein 5A (via N-terminus); this interaction seems to regulate the association of HCV particles with ApoE. Highly expressed in liver and small intestine and, at lower levels, in colon, kidney and spleen.

The protein localises to the lipid droplet. It is found in the endoplasmic reticulum membrane. Its subcellular location is the golgi apparatus. It localises to the cytoplasmic vesicle. The protein resides in the COPI-coated vesicle. Its function is as follows. Lipid transferase specifically expressed in hepatocytes, which promotes unilocular lipid droplet formation by mediating lipid droplet fusion. Lipid droplet fusion promotes their enlargement, restricting lipolysis and favoring lipid storage. Localizes on the lipid droplet surface, at focal contact sites between lipid droplets, and mediates atypical lipid droplet fusion by promoting directional net neutral lipid transfer from the smaller to larger lipid droplets. The transfer direction may be driven by the internal pressure difference between the contacting lipid droplet pair. Promotes lipid exchange and lipid droplet fusion in both small and large lipid droplet-containing hepatocytes. In addition to its role in lipid droplet fusion, also involved in cytoplasmic vesicle biogenesis and transport. Required for very-low-density lipoprotein (VLDL) lipidation and maturation. Probably involved in the biogenesis of VLDL transport vesicles by forming a COPII vesicle coat and facilitating the formation of endoplasmic reticulum-derived large vesicles. Also involved in sterol-regulated export of the SCAP-SREBP complex, composed of SCAP, SREBF1/SREBP1 and SREBF2/SREBP2, by promoting loading of SCAP-SREBP into COPII vesicles. May also activate apoptosis. Functionally, (Microbial infection) Involved in Hepatatis C virus (HCV) assembly and required for HCV entry into hepatocytes. In Homo sapiens (Human), this protein is Lipid transferase CIDEB.